A 186-amino-acid polypeptide reads, in one-letter code: ATP synthase subunit delta (186 aa).

The protein belongs to the ATPase delta chain family. F-type ATPases have 2 components, F(1) - the catalytic core - and F(0) - the membrane proton channel. F(1) has five subunits: alpha(3), beta(3), gamma(1), delta(1), epsilon(1). F(0) has three main subunits: a(1), b(2) and c(10-14). The alpha and beta chains form an alternating ring which encloses part of the gamma chain. F(1) is attached to F(0) by a central stalk formed by the gamma and epsilon chains, while a peripheral stalk is formed by the delta and b chains.

The protein resides in the cell inner membrane. Its function is as follows. F(1)F(0) ATP synthase produces ATP from ADP in the presence of a proton or sodium gradient. F-type ATPases consist of two structural domains, F(1) containing the extramembraneous catalytic core and F(0) containing the membrane proton channel, linked together by a central stalk and a peripheral stalk. During catalysis, ATP synthesis in the catalytic domain of F(1) is coupled via a rotary mechanism of the central stalk subunits to proton translocation. This protein is part of the stalk that links CF(0) to CF(1). It either transmits conformational changes from CF(0) to CF(1) or is implicated in proton conduction. The sequence is that of ATP synthase subunit delta from Brucella suis biovar 1 (strain 1330).